The sequence spans 135 residues: Transcriptional regulator HosA (135 aa).

Residues arginine 4–asparagine 134 enclose the HTH marR-type domain. The segment at residues glutamine 48–asparagine 71 is a DNA-binding region (H-T-H motif).

Involved in the temperature-dependent positive control of flagellum-driven swimming motility and cellular aggregation. Regulates fliC expression by directly interacting with fliC promoter. The polypeptide is Transcriptional regulator HosA (hosA) (Escherichia coli O127:H6 (strain E2348/69 / EPEC)).